Consider the following 249-residue polypeptide: Myelin protein P0 (249 aa).

A signal peptide spans 1-29 (MALGAIGDGRLLLLLVGLLSASGPSPTLA). The 114-residue stretch at 30–143 (IHVYTPREVY…DIVGKSSQVT (114 aa)) folds into the Ig-like V-type domain. The Extracellular segment spans residues 30–153 (IHVYTPREVY…LYVLEKVPTR (124 aa)). C50 and C127 are joined by a disulfide. N-linked (GlcNAc...) asparagine glycosylation is present at N122. Residues 154 to 179 (YGVVLGSIIGGVLLLVALLVAVVYLV) traverse the membrane as a helical segment. The Cytoplasmic portion of the chain corresponds to 180–249 (RFCWLRRQAV…APGEARKDKK (70 aa)). A disordered region spans residues 227-249 (RSAKAAAEKKSKGAPGEARKDKK).

The protein belongs to the myelin P0 protein family. As to expression, found only in peripheral nervous system Schwann cells.

The protein localises to the cell membrane. Is an adhesion molecule necessary for normal myelination in the peripheral nervous system. It mediates adhesion between adjacent myelin wraps and ultimately drives myelin compaction. This chain is Myelin protein P0 (MPZ), found in Gallus gallus (Chicken).